The primary structure comprises 171 residues: uncharacterized protein (171 aa).

This is an uncharacterized protein from Orgyia pseudotsugata multicapsid polyhedrosis virus (OpMNPV).